A 209-amino-acid chain; its full sequence is ATP phosphoribosyltransferase (209 aa).

This sequence belongs to the ATP phosphoribosyltransferase family. Short subfamily. Heteromultimer composed of HisG and HisZ subunits.

The protein localises to the cytoplasm. The catalysed reaction is 1-(5-phospho-beta-D-ribosyl)-ATP + diphosphate = 5-phospho-alpha-D-ribose 1-diphosphate + ATP. It functions in the pathway amino-acid biosynthesis; L-histidine biosynthesis; L-histidine from 5-phospho-alpha-D-ribose 1-diphosphate: step 1/9. Catalyzes the condensation of ATP and 5-phosphoribose 1-diphosphate to form N'-(5'-phosphoribosyl)-ATP (PR-ATP). Has a crucial role in the pathway because the rate of histidine biosynthesis seems to be controlled primarily by regulation of HisG enzymatic activity. The polypeptide is ATP phosphoribosyltransferase (Sulfurimonas denitrificans (strain ATCC 33889 / DSM 1251) (Thiomicrospira denitrificans (strain ATCC 33889 / DSM 1251))).